The following is a 143-amino-acid chain: MAKKKAISWIKLQVPAAQAAPGAKIGQALGPHGVSGPQFVKEFNERTAKMDPGIVVPVIITVYSDKSFSFIVKTPPASILIKKTIGIESGSKKSNTDKVGTISKEKLMEIVKIKMPDLNAKSESAAFKIISGSARSMGVEVEK.

Belongs to the universal ribosomal protein uL11 family. As to quaternary structure, part of the ribosomal stalk of the 50S ribosomal subunit. Interacts with L10 and the large rRNA to form the base of the stalk. L10 forms an elongated spine to which L12 dimers bind in a sequential fashion forming a multimeric L10(L12)X complex. Post-translationally, one or more lysine residues are methylated.

Its function is as follows. Forms part of the ribosomal stalk which helps the ribosome interact with GTP-bound translation factors. The protein is Large ribosomal subunit protein uL11 of Borrelia garinii subsp. bavariensis (strain ATCC BAA-2496 / DSM 23469 / PBi) (Borreliella bavariensis).